A 47-amino-acid chain; its full sequence is Variabilin (47 aa).

The Cell attachment site signature appears at 32–34; sequence RGD.

In terms of processing, contains 2 disulfide bonds. Expressed in salivary glands.

The protein resides in the secreted. In terms of biological role, potently inhibits platelet aggregation induced by ADP (IC(50)=157 nM, complete inhibition at 514 nM). Also inhibits platelet aggregation induced by collagen and by the thrombin receptor peptide SFLLRNP. Is a potent antagonist of the fibrinogen receptor glycoprotein IIb-IIIa (ITGA2B/ITGB3) and the vitronectin receptor alpha-v/beta-3 (ITGAV/ITGB3). The polypeptide is Variabilin (Dermacentor variabilis (American dog tick)).